Reading from the N-terminus, the 376-residue chain is Ribonucleoside-diphosphate reductase subunit beta (376 aa).

3 residues coordinate Fe cation: D85, E116, and H119. The active site involves Y123. The Fe cation site is built by E205, E239, and H242.

It belongs to the ribonucleoside diphosphate reductase small chain family. As to quaternary structure, tetramer of two alpha and two beta subunits. The cofactor is Fe cation.

The enzyme catalyses a 2'-deoxyribonucleoside 5'-diphosphate + [thioredoxin]-disulfide + H2O = a ribonucleoside 5'-diphosphate + [thioredoxin]-dithiol. In terms of biological role, provides the precursors necessary for DNA synthesis. Catalyzes the biosynthesis of deoxyribonucleotides from the corresponding ribonucleotides. In Buchnera aphidicola subsp. Acyrthosiphon pisum (strain APS) (Acyrthosiphon pisum symbiotic bacterium), this protein is Ribonucleoside-diphosphate reductase subunit beta (nrdB).